A 594-amino-acid polypeptide reads, in one-letter code: P-granule-associated novel protein 1 (594 aa).

Residues 1–18 (MRSLLSFVLLALARIAIS) form the signal peptide. The Extracellular portion of the chain corresponds to 19–513 (EETKSCIDIE…PEEEEVYRSG (495 aa)). LRR repeat units follow at residues 78–101 (GTELGRLTIRDSTVNVLPQDLFEN), 103–124 (FAKQVKLERCGLSTLQPNSFQS), 125–149 (LGGSAELLSLRENRIKKLEKGLFTG), 150–173 (LKSLKTLDLAMNKIQEIDVGAFEE), 175–197 (KKVEELLLNENDIRVLKTGTFDG), 198–221 (MKNLKKLTLQNCNLEIIQKGAFRG), 222–245 (LNSLEQLILSNNNLENIDWTIFSA), 246–269 (LKNLRVLDLGSNKISNVEMKSFPK), 271–290 (EKLVLNNNTIDSMKSIKLKD), 291–315 (LPSLVVALFDRNKIESIGDMDMFGL), 318–341 (SDRIETLSLARNNLSQISPKAFQH), 343–365 (PNLITLLLQYNQIEELSSHSPSQ), 374–397 (LKKLVTLQLSSNNLSVIRSDELPK), 399–419 (LSSLALDHNVISKIEARALEG), and 420–442 (MEIKRLYLHSNKLNYLYQGTFDS). A helical transmembrane segment spans residues 514–534 (WITVAATILTIVTIVIMVIIA). Residues 535–594 (MLYFKDARYQFPLRGRRSDSDLHKLIENDPLNIASDSILVVPAMPKRNTGPKKTVRFQNF) are Cytoplasmic-facing.

As to quaternary structure, interacts with glh-1. Interacts (via LRR regions) with myrf-1 (via C-terminus); the interaction promotes the role of myrf-1 in the synaptic remodeling of DD GABAergic motor neurons at the cell membrane. As to expression, expressed in the germline and somatic cells. In terms of tissue distribution, expressed in the germline and somatic cells. Expressed at higher levels in germline cells relative to somatic cells. Expressed in germline cells. As to expression, highly expressed in the pharynx and at lower levels in the intestine, but not detected in other tissues. Other studies suggest a broader expression pattern in somatic tissues: from embryogenesis to adult stages, expressed strongly in body wall muscle, vulva, somatic gonad and pharynx, at lower levels in the nerve ring, hypodermis, and rectal epithelia, and very weakly in the intestine.

The protein resides in the cytoplasm. It localises to the apical cell membrane. Its function is as follows. Regulates diverse developmental processes including larval molting and gonad maturation. In terms of biological role, promotes the localization of myrf-1 and myrf-2 to the cell membrane. In association with myrf-1, promotes the synaptic remodeling of DD GABAergic motor neurons whereby new synapses form in the dorsal processes of DD neurons. The polypeptide is P-granule-associated novel protein 1 (Caenorhabditis elegans).